The following is an 80-amino-acid chain: Toxin TdNa1 (80 aa).

Positions 1 to 20 (MKGIILFISCLMLIDVVVES) are cleaved as a signal peptide. The LCN-type CS-alpha/beta domain occupies 21–79 (RDAYPADWRGCKFSCFWGSSSWCNEECTSLGGSSGYCAWPACWCYGLPDSVRYYNNKCH). Cystine bridges form between cysteine 31–cysteine 78, cysteine 35–cysteine 57, cysteine 43–cysteine 62, and cysteine 47–cysteine 64.

This sequence belongs to the long (4 C-C) scorpion toxin superfamily. Sodium channel inhibitor family. Beta subfamily. In terms of tissue distribution, expressed by the venom gland.

It localises to the secreted. Its function is as follows. Inhibits the sodium (Nav) currents in an apparent irreversible manner. Produces small depolarization and induces repetitive firing in squid axons. Is specific for arthropods (crickets, triatomides, crabs and squids), but is non-toxic to mice. In Tityus discrepans (Venezuelan scorpion), this protein is Toxin TdNa1.